The primary structure comprises 209 residues: Kynurenine formamidase (209 aa).

Substrate is bound at residue Trp20. Positions 50, 54, and 56 each coordinate Zn(2+). The active-site Proton donor/acceptor is the His60. Zn(2+) is bound by residues His161 and Glu173.

Belongs to the Cyclase 1 superfamily. KynB family. As to quaternary structure, homodimer. Zn(2+) is required as a cofactor.

The enzyme catalyses N-formyl-L-kynurenine + H2O = L-kynurenine + formate + H(+). Its pathway is amino-acid degradation; L-tryptophan degradation via kynurenine pathway; L-kynurenine from L-tryptophan: step 2/2. Catalyzes the hydrolysis of N-formyl-L-kynurenine to L-kynurenine, the second step in the kynurenine pathway of tryptophan degradation. The protein is Kynurenine formamidase of Bacillus thuringiensis (strain Al Hakam).